Reading from the N-terminus, the 191-residue chain is uncharacterized protein (191 aa).

The N-terminal stretch at 1–23 (MKKTMSAITAAAAVTSCFTGFGA) is a signal peptide.

This is an uncharacterized protein from Bacillus subtilis (strain 168).